Here is a 281-residue protein sequence, read N- to C-terminus: Large ribosomal subunit protein uL2 (281 aa).

The span at 27–38 shows a compositional bias: basic and acidic residues; sequence DSPEKSLTEPLK. 2 disordered regions span residues 27 to 59 and 225 to 281; these read DSPE…GGHK and AMNP…ARSQ. Residues 45–59 are compositionally biased toward basic residues; sequence VHGHITRRHQGGGHK.

Belongs to the universal ribosomal protein uL2 family. Part of the 50S ribosomal subunit. Forms a bridge to the 30S subunit in the 70S ribosome.

In terms of biological role, one of the primary rRNA binding proteins. Required for association of the 30S and 50S subunits to form the 70S ribosome, for tRNA binding and peptide bond formation. It has been suggested to have peptidyltransferase activity; this is somewhat controversial. Makes several contacts with the 16S rRNA in the 70S ribosome. In Myxococcus xanthus (strain DK1622), this protein is Large ribosomal subunit protein uL2.